We begin with the raw amino-acid sequence, 482 residues long: Ribulose bisphosphate carboxylase large chain (482 aa).

Residues 1–2 (MS) constitute a propeptide that is removed on maturation. Proline 3 is subject to N-acetylproline. N6,N6,N6-trimethyllysine is present on lysine 14. Residues asparagine 123 and threonine 173 each coordinate substrate. Lysine 175 serves as the catalytic Proton acceptor. Lysine 177 is a substrate binding site. Lysine 201, aspartate 203, and glutamate 204 together coordinate Mg(2+). At lysine 201 the chain carries N6-carboxylysine. The active-site Proton acceptor is the histidine 294. Residues arginine 295, histidine 327, and serine 379 each coordinate substrate.

It belongs to the RuBisCO large chain family. Type I subfamily. Heterohexadecamer of 8 large chains and 8 small chains; disulfide-linked. The disulfide link is formed within the large subunit homodimers. It depends on Mg(2+) as a cofactor. The disulfide bond which can form in the large chain dimeric partners within the hexadecamer appears to be associated with oxidative stress and protein turnover.

The protein localises to the plastid. The protein resides in the chloroplast. The enzyme catalyses 2 (2R)-3-phosphoglycerate + 2 H(+) = D-ribulose 1,5-bisphosphate + CO2 + H2O. It catalyses the reaction D-ribulose 1,5-bisphosphate + O2 = 2-phosphoglycolate + (2R)-3-phosphoglycerate + 2 H(+). RuBisCO catalyzes two reactions: the carboxylation of D-ribulose 1,5-bisphosphate, the primary event in carbon dioxide fixation, as well as the oxidative fragmentation of the pentose substrate in the photorespiration process. Both reactions occur simultaneously and in competition at the same active site. In Phytolacca americana (American pokeweed), this protein is Ribulose bisphosphate carboxylase large chain.